Here is a 461-residue protein sequence, read N- to C-terminus: Photosystem II CP43 reaction center protein (461 aa).

The propeptide occupies 1 to 2 (ME). Residue T3 is modified to N-acetylthreonine. T3 bears the Phosphothreonine mark. 5 helical membrane passes run 57-81 (LFEV…PHLA), 122-143 (LIGP…KDKN), 166-188 (KALY…RIIT), 243-263 (QPWA…LSYS), and 279-300 (WFNN…ASQS). A [CaMn4O5] cluster-binding site is contributed by E355. The helical transmembrane segment at 435 to 459 (RARAAAAGFEKGIDRFNEPTLSLRP) threads the bilayer.

Belongs to the PsbB/PsbC family. PsbC subfamily. As to quaternary structure, PSII is composed of 1 copy each of membrane proteins PsbA, PsbB, PsbC, PsbD, PsbE, PsbF, PsbH, PsbI, PsbJ, PsbK, PsbL, PsbM, PsbT, PsbX, PsbY, PsbZ, Psb30/Ycf12, at least 3 peripheral proteins of the oxygen-evolving complex and a large number of cofactors. It forms dimeric complexes. Requires Binds multiple chlorophylls and provides some of the ligands for the Ca-4Mn-5O cluster of the oxygen-evolving complex. It may also provide a ligand for a Cl- that is required for oxygen evolution. PSII binds additional chlorophylls, carotenoids and specific lipids. as cofactor.

The protein localises to the plastid. It localises to the chloroplast thylakoid membrane. Functionally, one of the components of the core complex of photosystem II (PSII). It binds chlorophyll and helps catalyze the primary light-induced photochemical processes of PSII. PSII is a light-driven water:plastoquinone oxidoreductase, using light energy to abstract electrons from H(2)O, generating O(2) and a proton gradient subsequently used for ATP formation. The protein is Photosystem II CP43 reaction center protein of Oedogonium cardiacum (Filamentous green alga).